The following is a 558-amino-acid chain: Tyrosine N-monooxygenase (558 aa).

The chain crosses the membrane as a helical span at residues 13–33 (VLAAPLLSSSAILKLLLFVVT). The disordered stretch occupies residues 48–67 (TTKCSSTTCASPPAGVGNPP). Residues 49 to 65 (TKCSSTTCASPPAGVGN) show a composition bias toward low complexity. Heme b is bound by residues Arg138, Arg167, His422, Arg491, and Cys493.

The protein belongs to the cytochrome P450 family. It depends on heme b as a cofactor.

It is found in the endoplasmic reticulum membrane. The enzyme catalyses L-tyrosine + 2 reduced [NADPH--hemoprotein reductase] + 2 O2 = (E)-4-hydroxyphenylacetaldehyde oxime + 2 oxidized [NADPH--hemoprotein reductase] + CO2 + 3 H2O + 2 H(+). The catalysed reaction is L-tyrosine + reduced [NADPH--hemoprotein reductase] + O2 = N-hydroxy-L-tyrosine + oxidized [NADPH--hemoprotein reductase] + H2O + 2 H(+). It carries out the reaction N-hydroxy-L-tyrosine + reduced [NADPH--hemoprotein reductase] + O2 = N,N-dihydroxy-L-tyrosine + oxidized [NADPH--hemoprotein reductase] + H2O + H(+). It catalyses the reaction N,N-dihydroxy-L-tyrosine + H(+) = (E)-4-hydroxyphenylacetaldehyde oxime + CO2 + H2O. The protein operates within secondary metabolite biosynthesis; dhurrin biosynthesis; dhurrin from L-tyrosine: step 1/3. Its function is as follows. Cytochrome P450 involved in the biosynthesis of the cyanogenic glucoside dhurrin. Catalyzes the conversion of L-tyrosine to p-hydroxyphenylacetaldehyde oxime, via the N-hydroxy-L-tyrosine and N,N-dihydroxy-L-tyrosine intermediates. Produces the (E) isomer of the final oxime product. The chain is Tyrosine N-monooxygenase (CYP79A1) from Sorghum bicolor (Sorghum).